We begin with the raw amino-acid sequence, 477 residues long: MSRAAVPSVRRRLLVNLLVGFVLCWLSVAALTYHLSLKQVNRLFDDDMVDFGEAALRLLDLATEDQAGEDGSITEIIERSREAIQGLPLLRRESALGYALWRDGQPLLSSLNLPPEITAQGPGFSTVEAQGTHWRVLQLNIDGFQIWISENLIYRQHTMNLLLFYSLFPLLLALPLLGGLVWFGVARGLAPLREVQAEVQQRSARHLQPIAVEAVPLEIRGLIDELNLLLERLRTALEAERRLTSDAAHEIRTPLASLRTHAQVALRSEDPKAHARGLLQVSRSVERISTLMEQILLLARLDGDALLEQFHPVNLATLAEDVLSELARQAIDKDIELSLHQETVYVMGIDLWLKAMVGNLVGNALRYTPAGGQVEIRVENRAQHAVLRVRDNGPGVALEEQQAIFTRFYRSPATSSGEGSGLGLPIVKRIVELHFGSIGLGKGLEGKGLEVQVFLPKTQPDATRPPARGPDSGRSHI.

A run of 2 helical transmembrane segments spans residues 13-33 (LLVN…ALTY) and 161-181 (LLLF…GGLV). The region spanning 186–238 (ARGLAPLREVQAEVQQRSARHLQPIAVEAVPLEIRGLIDELNLLLERLRTALE) is the HAMP domain. The Histidine kinase domain occupies 246-459 (DAAHEIRTPL…EVQVFLPKTQ (214 aa)). At histidine 249 the chain carries Phosphohistidine; by autocatalysis. The segment at 455–477 (LPKTQPDATRPPARGPDSGRSHI) is disordered.

The protein localises to the membrane. It catalyses the reaction ATP + protein L-histidine = ADP + protein N-phospho-L-histidine.. Its function is as follows. Member of the two-component regulatory system PmrA/PmrB that plays a role in the regulation of resistance towards polymyxin B and cationic antimicrobial peptides in response to limiting concentrations of Mg(2+). Also autoregulates its own pmrAB operon under Mg(2+)-limiting conditions. May function as a membrane-associated protein kinase that phosphorylates PmrA in response to environmental signals leading to activation of specific gene promoters. The sequence is that of Sensor protein kinase PmrB (pmrB) from Pseudomonas aeruginosa (strain ATCC 15692 / DSM 22644 / CIP 104116 / JCM 14847 / LMG 12228 / 1C / PRS 101 / PAO1).